The sequence spans 499 residues: U4/U6 small nuclear ribonucleoprotein Prp31 (499 aa).

Residues 1–43 (MSLADELLADLEEAAEEEEGGSYGEEEEEPAIEDVQEETQLDL) are disordered. The span at 7–40 (LLADLEEAAEEEEGGSYGEEEEEPAIEDVQEETQ) shows a compositional bias: acidic residues. Coiled-coil stretches lie at residues 85-120 (EAAP…KYSK) and 181-215 (DEEL…MSFI). The region spanning 215 to 333 (IAPNLSIIIG…IERKFDKWQE (119 aa)) is the Nop domain. Residues 334–357 (PPPVKQVKPLPAPLDGQRKKRGGR) form a disordered region. Positions 351-364 (RKKRGGRRYRKMKE) match the Nuclear localization signal (NLS) motif. 3 positions are modified to phosphoserine: serine 379, serine 395, and serine 432. Lysine 438 is subject to N6-acetyllysine. Serine 439 carries the post-translational modification Phosphoserine. Phosphothreonine is present on threonine 440. Position 450 is a phosphoserine (serine 450). Threonine 455 is modified (phosphothreonine). Glycyl lysine isopeptide (Lys-Gly) (interchain with G-Cter in SUMO2) cross-links involve residues lysine 471 and lysine 478.

The protein belongs to the PRP31 family. In terms of assembly, identified in the spliceosome B complex. Component of the U4/U6-U5 tri-snRNP complex composed of the U4, U6 and U5 snRNAs and at least PRPF3, PRPF4, PRPF6, PRPF8, PRPF31, SNRNP200, TXNL4A, SNRNP40, DDX23, CD2BP2, PPIH, SNU13, EFTUD2, SART1 and USP39. Interacts with a complex formed by SNU13 and U4 snRNA, but not with SNU13 or U4 snRNA alone. The complex formed by SNU13 and PRPF31 also binds U4atac snRNA, a characteristic component of specific, less abundant spliceosomal complexes. Interacts with PRPF6/U5 snRNP-associated 102 kDa protein. Component of some MLL1/MLL complex, at least composed of the core components KMT2A/MLL1, ASH2L, HCFC1/HCF1, WDR5 and RBBP5, as well as the facultative components BACC1, CHD8, E2F6, HSP70, INO80C, KANSL1, LAS1L, MAX, MCRS1, MGA, KAT8/MOF, PELP1, PHF20, PRP31, RING2, RUVB1/TIP49A, RUVB2/TIP49B, SENP3, TAF1, TAF4, TAF6, TAF7, TAF9 and TEX10. Interacts (via its NLS) with CTNNBL1. Interacts with USH1G. Post-translationally, phosphorylated by PRP4K during spliceosome assembly.

The protein localises to the nucleus. It is found in the nucleus speckle. Its subcellular location is the cajal body. Its function is as follows. Involved in pre-mRNA splicing as component of the spliceosome. Required for the assembly of the U4/U5/U6 tri-snRNP complex, one of the building blocks of the spliceosome. This chain is U4/U6 small nuclear ribonucleoprotein Prp31 (Prpf31), found in Mus musculus (Mouse).